The sequence spans 304 residues: Recombination-associated protein RdgC (304 aa).

This sequence belongs to the RdgC family.

It localises to the cytoplasm. The protein resides in the nucleoid. May be involved in recombination. The polypeptide is Recombination-associated protein RdgC (Shewanella sp. (strain ANA-3)).